Here is a 253-residue protein sequence, read N- to C-terminus: Vitamin B12 import ATP-binding protein BtuD (253 aa).

Residues 4–236 (LQLSNVSVDT…NILSEVFEVD (233 aa)) form the ABC transporter domain. 32–39 (GPNGAGKS) is a binding site for ATP.

Belongs to the ABC transporter superfamily. Vitamin B12 importer (TC 3.A.1.13.1) family. In terms of assembly, the complex is composed of two ATP-binding proteins (BtuD), two transmembrane proteins (BtuC) and a solute-binding protein (BtuF).

Its subcellular location is the cell inner membrane. The catalysed reaction is an R-cob(III)alamin(out) + ATP + H2O = an R-cob(III)alamin(in) + ADP + phosphate + H(+). Functionally, part of the ABC transporter complex BtuCDF involved in vitamin B12 import. Responsible for energy coupling to the transport system. In Yersinia enterocolitica serotype O:8 / biotype 1B (strain NCTC 13174 / 8081), this protein is Vitamin B12 import ATP-binding protein BtuD.